Here is a 684-residue protein sequence, read N- to C-terminus: Methionine--tRNA ligase (684 aa).

The short motif at 17–27 is the 'HIGH' region element; it reads PYANGKAHVGH. Residues Cys148, Cys151, Cys160, and Cys164 each contribute to the Zn(2+) site. The 'KMSKS' region signature appears at 330–334; it reads TFSKS. Lys333 is an ATP binding site. One can recognise a tRNA-binding domain in the interval 582 to 684; it reads DFSKLDIRIG…KETNPGTCIH (103 aa).

This sequence belongs to the class-I aminoacyl-tRNA synthetase family. MetG type 1 subfamily. In terms of assembly, homodimer. Zn(2+) is required as a cofactor.

It localises to the cytoplasm. It carries out the reaction tRNA(Met) + L-methionine + ATP = L-methionyl-tRNA(Met) + AMP + diphosphate. Is required not only for elongation of protein synthesis but also for the initiation of all mRNA translation through initiator tRNA(fMet) aminoacylation. The protein is Methionine--tRNA ligase of Methanococcoides burtonii (strain DSM 6242 / NBRC 107633 / OCM 468 / ACE-M).